The chain runs to 50 residues: Protein hunchback (50 aa).

3 consecutive C2H2-type zinc fingers follow at residues His-1–His-5, Phe-11–His-33, and Tyr-39–Tyr-50.

Belongs to the hunchback C2H2-type zinc-finger protein family.

The protein resides in the nucleus. Its function is as follows. Gap class segmentation protein that controls development of head structures. This chain is Protein hunchback (hb), found in Platynereis dumerilii (Dumeril's clam worm).